A 469-amino-acid chain; its full sequence is ATP synthase subunit beta (469 aa).

156-163 is a binding site for ATP; it reads GGAGVGKT.

Belongs to the ATPase alpha/beta chains family. In terms of assembly, F-type ATPases have 2 components, CF(1) - the catalytic core - and CF(0) - the membrane proton channel. CF(1) has five subunits: alpha(3), beta(3), gamma(1), delta(1), epsilon(1). CF(0) has three main subunits: a(1), b(2) and c(9-12). The alpha and beta chains form an alternating ring which encloses part of the gamma chain. CF(1) is attached to CF(0) by a central stalk formed by the gamma and epsilon chains, while a peripheral stalk is formed by the delta and b chains.

The protein localises to the cell membrane. It carries out the reaction ATP + H2O + 4 H(+)(in) = ADP + phosphate + 5 H(+)(out). Its function is as follows. Produces ATP from ADP in the presence of a proton gradient across the membrane. The catalytic sites are hosted primarily by the beta subunits. In Lactococcus lactis subsp. cremoris (strain SK11), this protein is ATP synthase subunit beta.